A 207-amino-acid chain; its full sequence is Ribonuclease HII (207 aa).

The RNase H type-2 domain occupies 20–207 (QLFAGVDEVG…KPVKRVLGIE (188 aa)). A divalent metal cation is bound by residues aspartate 26, glutamate 27, and aspartate 118.

Belongs to the RNase HII family. Mn(2+) serves as cofactor. The cofactor is Mg(2+).

It localises to the cytoplasm. It carries out the reaction Endonucleolytic cleavage to 5'-phosphomonoester.. Functionally, endonuclease that specifically degrades the RNA of RNA-DNA hybrids. This Aliivibrio fischeri (strain MJ11) (Vibrio fischeri) protein is Ribonuclease HII.